The chain runs to 354 residues: Uroporphyrinogen decarboxylase (354 aa).

Residues 27-31 (RQAGR), Phe46, Asp77, Tyr154, Thr209, and His327 each bind substrate.

Belongs to the uroporphyrinogen decarboxylase family. Homodimer.

The protein resides in the cytoplasm. The catalysed reaction is uroporphyrinogen III + 4 H(+) = coproporphyrinogen III + 4 CO2. It functions in the pathway porphyrin-containing compound metabolism; protoporphyrin-IX biosynthesis; coproporphyrinogen-III from 5-aminolevulinate: step 4/4. Its function is as follows. Catalyzes the decarboxylation of four acetate groups of uroporphyrinogen-III to yield coproporphyrinogen-III. In Pseudomonas putida (strain ATCC 47054 / DSM 6125 / CFBP 8728 / NCIMB 11950 / KT2440), this protein is Uroporphyrinogen decarboxylase.